We begin with the raw amino-acid sequence, 294 residues long: 33 kDa chaperonin (294 aa).

Cystine bridges form between Cys-238/Cys-240 and Cys-271/Cys-274.

Belongs to the HSP33 family. In terms of processing, under oxidizing conditions two disulfide bonds are formed involving the reactive cysteines. Under reducing conditions zinc is bound to the reactive cysteines and the protein is inactive.

It is found in the cytoplasm. In terms of biological role, redox regulated molecular chaperone. Protects both thermally unfolding and oxidatively damaged proteins from irreversible aggregation. Plays an important role in the bacterial defense system toward oxidative stress. The protein is 33 kDa chaperonin of Clostridium novyi (strain NT).